Here is a 539-residue protein sequence, read N- to C-terminus: Tetracenomycin B2 monooxygenase-dioxygenase (539 aa).

FAD-binding residues include L15, E35, Q128, and L152. Y231 acts as the Proton acceptor in catalysis. An FAD-binding site is contributed by D313.

Belongs to the PheA/TfdB FAD monooxygenase family. Requires FAD as cofactor.

It catalyses the reaction tetracenomycin B2 + 2 NADPH + 2 O2 + 2 H(+) = 8-demethyltetracenomycin C + 2 NADP(+) + H2O. The enzyme catalyses tetracenomycin A2 + 2 NADPH + 2 O2 + 2 H(+) = tetracenomycin C + 2 NADP(+) + H2O. The protein operates within antibiotic biosynthesis. Involved in the biosynthesis of elloramycin, an antitumor polyketide. In vivo, probably catalyzes the triple hydroxylation of 8-demethyltetracenomycin A2 (tetracenomycin B2) at positions C-4, C-4a and C-12a to give 8-demethyltetracenomycin C (8-DMTC). In vitro, catalyzes the triple hydroxylation of tetracenomycin A2 (TCM A2) to give tetracenomycin C (TCM C). Uses NADPH as an electron donor and requires molecular O(2). The sequence is that of Tetracenomycin B2 monooxygenase-dioxygenase from Streptomyces olivaceus.